The following is a 181-amino-acid chain: Large ribosomal subunit protein uL5 (181 aa).

This sequence belongs to the universal ribosomal protein uL5 family. As to quaternary structure, part of the 50S ribosomal subunit; part of the 5S rRNA/L5/L18/L25 subcomplex. Contacts the 5S rRNA and the P site tRNA. Forms a bridge to the 30S subunit in the 70S ribosome.

In terms of biological role, this is one of the proteins that bind and probably mediate the attachment of the 5S RNA into the large ribosomal subunit, where it forms part of the central protuberance. In the 70S ribosome it contacts protein S13 of the 30S subunit (bridge B1b), connecting the 2 subunits; this bridge is implicated in subunit movement. Contacts the P site tRNA; the 5S rRNA and some of its associated proteins might help stabilize positioning of ribosome-bound tRNAs. The polypeptide is Large ribosomal subunit protein uL5 (Sulfurovum sp. (strain NBC37-1)).